Reading from the N-terminus, the 113-residue chain is ATP-dependent Clp protease adapter protein ClpS (113 aa).

Residues 1–11 show a composition bias toward pro residues; sequence MTRPTIPPGPP. Disordered stretches follow at residues 1–24 and 92–113; these read MTRP…ERTE and TAHA…SEGE.

It belongs to the ClpS family. In terms of assembly, binds to the N-terminal domain of the chaperone ClpA.

Involved in the modulation of the specificity of the ClpAP-mediated ATP-dependent protein degradation. In Deinococcus radiodurans (strain ATCC 13939 / DSM 20539 / JCM 16871 / CCUG 27074 / LMG 4051 / NBRC 15346 / NCIMB 9279 / VKM B-1422 / R1), this protein is ATP-dependent Clp protease adapter protein ClpS.